A 616-amino-acid polypeptide reads, in one-letter code: Sulfite reductase [NADPH] hemoprotein beta-component (616 aa).

Residues 1–10 (MDDHSPRDAA) show a composition bias toward basic and acidic residues. The interval 1–35 (MDDHSPRDAAETPAPGPAATPAKRVYETPPTSRPI) is disordered. Positions 11–22 (ETPAPGPAATPA) are enriched in low complexity. [4Fe-4S] cluster is bound by residues cysteine 470, cysteine 476, cysteine 515, and cysteine 519. Residue cysteine 519 participates in siroheme binding.

It belongs to the nitrite and sulfite reductase 4Fe-4S domain family. In terms of assembly, alpha(8)-beta(8). The alpha component is a flavoprotein, the beta component is a hemoprotein. The cofactor is siroheme. Requires [4Fe-4S] cluster as cofactor.

The catalysed reaction is hydrogen sulfide + 3 NADP(+) + 3 H2O = sulfite + 3 NADPH + 4 H(+). It functions in the pathway sulfur metabolism; hydrogen sulfide biosynthesis; hydrogen sulfide from sulfite (NADPH route): step 1/1. Functionally, component of the sulfite reductase complex that catalyzes the 6-electron reduction of sulfite to sulfide. This is one of several activities required for the biosynthesis of L-cysteine from sulfate. In Methylobacterium radiotolerans (strain ATCC 27329 / DSM 1819 / JCM 2831 / NBRC 15690 / NCIMB 10815 / 0-1), this protein is Sulfite reductase [NADPH] hemoprotein beta-component.